A 187-amino-acid chain; its full sequence is UPF0301 protein PMI0339 (187 aa).

The protein belongs to the UPF0301 (AlgH) family.

This is UPF0301 protein PMI0339 from Proteus mirabilis (strain HI4320).